The chain runs to 146 residues: MADFHFQGTSALALDAKGRVTVPARHRESLVSLAGSQLTLTKHPEGCLMVFPRPVWEGFRAKVEALPMAASGWKRIFLGSAMDVEIDSGSRMLISPELRAAAGLVHDVLLIGMGNHLELWDAQRQASAEAAVLQQPMPDVLQDFSF.

SpoVT-AbrB domains follow at residues 9–55 (TSAL…PRPV) and 81–124 (AMDV…DAQR).

Belongs to the MraZ family. As to quaternary structure, forms oligomers.

The protein localises to the cytoplasm. The protein resides in the nucleoid. The polypeptide is Transcriptional regulator MraZ (Leptothrix cholodnii (strain ATCC 51168 / LMG 8142 / SP-6) (Leptothrix discophora (strain SP-6))).